Consider the following 312-residue polypeptide: Ribosomal RNA small subunit methyltransferase H (312 aa).

Residues glycine 33 to histidine 35, aspartate 53, phenylalanine 80, aspartate 102, and glutamine 109 each bind S-adenosyl-L-methionine.

This sequence belongs to the methyltransferase superfamily. RsmH family.

Its subcellular location is the cytoplasm. The catalysed reaction is cytidine(1402) in 16S rRNA + S-adenosyl-L-methionine = N(4)-methylcytidine(1402) in 16S rRNA + S-adenosyl-L-homocysteine + H(+). Its function is as follows. Specifically methylates the N4 position of cytidine in position 1402 (C1402) of 16S rRNA. The polypeptide is Ribosomal RNA small subunit methyltransferase H (Heliobacterium mobile (Heliobacillus mobilis)).